The sequence spans 1487 residues: MQCYTELTPPTAVTHSVTLQLVPGQGTNLAVAKASLLQIFKTKVVSAEIDTYATLNGTNTSSKAAAAGRYDSRLVNDDDGFEASFLGGDNIAARADRANSAKLVLVAEVTLPGTMTGLARIKKPSGSSSGGADCLLLSFRDARLSLVEWNVERNTLETVSIHYYEKEELVGSPWVAPLHQYPTLLVADPASRCAALKFSERNLAILPFKQPDEDMDMDNWDEELDGPRPKKDLSGAVANGASTIEDTPYSPSFVLRLSKLEASLLHPVHLAFLHEYRDPTIGVLSSTKTASNSLGHKDHFTYMVFTLDLQQRASTTILAVNGLPQDLFRVVALPAPVGGALLVGANELIHIDQSGKSNGIAVNPLTKQTTSFSLVDQADLDLRLEGCAIDVLAAELGEFLLILNDGRLGLITFRIDGRTVSGLSIKMIAPEAGGSVIQSRVTSLSRMGRSTMFVGSEEGDSVLLGWTRRQGQTQKRKSRLQDADLDLDLDDEDLEDDDDDDLYGEESASPEQAMSAAKAIKSGDLNFRIHDRLLSIAPIQKMTYGQPVTLPDSEEERNSEGVRSDLQLVCAVGRGKASALAIMNLAIQPKIIGRFEFPEARGFWTVCAKKPIPKTLVGDKGPMNNDYDTSGQYHKFMIVAKVDLDGYETSDVYALTAAGFESLTGTEFEPAAGFTVEAGTMGKDSRILQVLKSEVRCYDGDLGLSQIVPMLDEETGAEPRVRTASIADPFLLLIRDDFSVFIAEMSPKLLELEEVEKEDQILTSTKWLAGCLYTDTSGVFADETVGKGTKDNILMFLLSTSGVLYIYRLPDLTKPVYVAEGLSYIPPGLSADYAARKGTAKESVAEILVADLGDTTHKSPYLILRHANDDLTLYQPYRLKATAGQPFSKSLFFQKVPNSTFAKAPEEKPADDDEPHNAQRFLPMRRCSNISGYSTVFLPGSSPSFILKTAKSSPRVLSLQGSGVQAMSSFHTEGCEHGFIYADTNGIARVTQIPTDSSYAELGLSVKKIPIGVDTQSVAYHPPTQAYVVGCNDVEPFELPKDDDYHKEWARENITFKPMVDRGVLKLLSGITWTVIDTVEMEPCETVLCVETLNLEVSESTNERKQLIAVGTALIKGEDLPTRGRVYVFDIADVIPEPGKPETSKKLKLVAKEDIPRGAVTALSEVGTQGLMLVAQGQKCMVRGLKEDGTLLPVAFMDMNCYVTSVKELPGTGLCLMADAFKGVWFTGYTEEPYKMMLFGKSSTRMEVLNADFLPDGKELYIVASDADGHIHILQFDPEHPKSLQGHLLLHRTTFNTGAHHPTSSLLLPAVYPNPSSLSSNSEENSPHILLLASPTGVLATLRPLQENAYRRLSSLAVQLTNGLPHPAGLNPKGYRLPSPSASASMQLPGVDAGIGRNIVDGKILERFLELGTGKRQEMAGRAGYVVGTGAHGVNPAGSGKMMGGGGGLSLGGLRLNGLHGQEGGMEWEEVRGELGVVLGWSGLGYF.

A compositionally biased stretch (acidic residues) spans 486–504; the sequence is DLDLDDEDLEDDDDDDLYG. The tract at residues 486–513 is disordered; sequence DLDLDDEDLEDDDDDDLYGEESASPEQA.

The protein belongs to the CFT1 family.

The protein localises to the nucleus. In terms of biological role, RNA-binding component of the cleavage and polyadenylation factor (CPF) complex, which plays a key role in polyadenylation-dependent pre-mRNA 3'-end formation and cooperates with cleavage factors including the CFIA complex and hrp1/CFIB. Involved in poly(A) site recognition. May be involved in coupling transcription termination and mRNA 3'-end formation. The polypeptide is Protein cft1 (paa-3) (Neurospora crassa (strain ATCC 24698 / 74-OR23-1A / CBS 708.71 / DSM 1257 / FGSC 987)).